Here is a 230-residue protein sequence, read N- to C-terminus: NAD(P)H-hydrate epimerase (230 aa).

Positions 11-223 (YAAADIRAAE…DVGLDLSGAT (213 aa)) constitute a YjeF N-terminal domain. 59-63 (NNGGD) is a (6S)-NADPHX binding site. Asn-60 and Asp-125 together coordinate K(+). (6S)-NADPHX-binding positions include 129-137 (GIGTTDSPA) and Asp-165. Residue Ser-168 coordinates K(+).

Belongs to the NnrE/AIBP family. Requires K(+) as cofactor.

It carries out the reaction (6R)-NADHX = (6S)-NADHX. The enzyme catalyses (6R)-NADPHX = (6S)-NADPHX. Catalyzes the epimerization of the S- and R-forms of NAD(P)HX, a damaged form of NAD(P)H that is a result of enzymatic or heat-dependent hydration. This is a prerequisite for the S-specific NAD(P)H-hydrate dehydratase to allow the repair of both epimers of NAD(P)HX. This Clavibacter michiganensis subsp. michiganensis (strain NCPPB 382) protein is NAD(P)H-hydrate epimerase.